The sequence spans 67 residues: UPF0337 protein SP_1805 (67 aa).

The tract at residues 1 to 30 is disordered; it reads MSVEEKLNQAKGSIKEGVGKAIGDEKMEKE.

The protein belongs to the UPF0337 (CsbD) family.

This is UPF0337 protein SP_1805 from Streptococcus pneumoniae serotype 4 (strain ATCC BAA-334 / TIGR4).